The chain runs to 171 residues: Crossover junction endodeoxyribonuclease RuvC (171 aa).

Catalysis depends on residues Asp-7, Glu-66, and Asp-138. Asp-7, Glu-66, and Asp-138 together coordinate Mg(2+).

It belongs to the RuvC family. Homodimer which binds Holliday junction (HJ) DNA. The HJ becomes 2-fold symmetrical on binding to RuvC with unstacked arms; it has a different conformation from HJ DNA in complex with RuvA. In the full resolvosome a probable DNA-RuvA(4)-RuvB(12)-RuvC(2) complex forms which resolves the HJ. It depends on Mg(2+) as a cofactor.

The protein resides in the cytoplasm. It carries out the reaction Endonucleolytic cleavage at a junction such as a reciprocal single-stranded crossover between two homologous DNA duplexes (Holliday junction).. Functionally, the RuvA-RuvB-RuvC complex processes Holliday junction (HJ) DNA during genetic recombination and DNA repair. Endonuclease that resolves HJ intermediates. Cleaves cruciform DNA by making single-stranded nicks across the HJ at symmetrical positions within the homologous arms, yielding a 5'-phosphate and a 3'-hydroxyl group; requires a central core of homology in the junction. The consensus cleavage sequence is 5'-(A/T)TT(C/G)-3'. Cleavage occurs on the 3'-side of the TT dinucleotide at the point of strand exchange. HJ branch migration catalyzed by RuvA-RuvB allows RuvC to scan DNA until it finds its consensus sequence, where it cleaves and resolves the cruciform DNA. In Thiobacillus denitrificans (strain ATCC 25259 / T1), this protein is Crossover junction endodeoxyribonuclease RuvC.